Consider the following 544-residue polypeptide: Chaperonin GroEL 2 (544 aa).

ATP is bound by residues 29–32, 86–90, Gly413, and Asp495; these read TLGP and DGTTT. Residues 525–544 are disordered; it reads PEPKSNKPAGGGGGVDDYDY. Residues 533 to 544 are compositionally biased toward gly residues; it reads AGGGGGVDDYDY.

It belongs to the chaperonin (HSP60) family. Forms a cylinder of 14 subunits composed of two heptameric rings stacked back-to-back. Interacts with the co-chaperonin GroES.

It localises to the cytoplasm. It catalyses the reaction ATP + H2O + a folded polypeptide = ADP + phosphate + an unfolded polypeptide.. Together with its co-chaperonin GroES, plays an essential role in assisting protein folding. The GroEL-GroES system forms a nano-cage that allows encapsulation of the non-native substrate proteins and provides a physical environment optimized to promote and accelerate protein folding. This chain is Chaperonin GroEL 2, found in Synechococcus sp. (strain JA-3-3Ab) (Cyanobacteria bacterium Yellowstone A-Prime).